The sequence spans 378 residues: CST complex subunit STN1 (378 aa).

The tract at residues 8-195 (MECESSPREE…KVYDQPFRNP (188 aa)) is interaction with CTC1. The segment at residues 64–165 (VDIMGAVISV…EICANIYYKV (102 aa)) is a DNA-binding region (OB). Winged helix-turn-helix (wHTH) regions lie at residues 201-305 (EALN…YVTT) and 306-378 (KDKD…YAAF).

Belongs to the STN1 family. As to quaternary structure, component of the CST complex, composed of TEN1/C17orf106, CTC1/C17orf68 and STN1; in the complex interacts directly with TEN1 and CTC1. Interacts with ACD/TPP1. Interacts with POT1 and POLA1.

It localises to the nucleus. The protein localises to the chromosome. The protein resides in the telomere. In terms of biological role, component of the CST complex proposed to act as a specialized replication factor promoting DNA replication under conditions of replication stress or natural replication barriers such as the telomere duplex. The CST complex binds single-stranded DNA with high affinity in a sequence-independent manner, while isolated subunits bind DNA with low affinity by themselves. Initially the CST complex has been proposed to protect telomeres from DNA degradation. However, the CST complex has been shown to be involved in several aspects of telomere replication. The CST complex inhibits telomerase and is involved in telomere length homeostasis; it is proposed to bind to newly telomerase-synthesized 3' overhangs and to terminate telomerase action implicating the association with the ACD:POT1 complex thus interfering with its telomerase stimulation activity. The CST complex is also proposed to be involved in fill-in synthesis of the telomeric C-strand probably implicating recruitment and activation of DNA polymerase alpha. The CST complex facilitates recovery from many forms of exogenous DNA damage; seems to be involved in the re-initiation of DNA replication at repaired forks and/or dormant origins. Required for efficicient replication of the duplex region of the telomere. Promotes efficient replication of lagging-strand telomeres. Promotes general replication start following replication-fork stalling implicating new origin firing. May be in involved in C-strand fill-in during late S/G2 phase independent of its role in telomere duplex replication. The polypeptide is CST complex subunit STN1 (Mus musculus (Mouse)).